The chain runs to 331 residues: MSTKEKLISHVMKEEPVGSGNKVTVVGVGMVGMASAISILLKDLCDELAMVDVMEDKLKGEVMDLQHGSLFLKTKIVGDKDYSVTANSKVVVVTAGARQQEGESRLNLVQRNVNIFKFIIPNIVKYSPNCILMVVSNPVDILTYVAWKLSGFPRHRVLGSGTNLDSARFRHLIGEKLHLHPSSCHAWIVGEHGDSSVPVWSGVNVAGVSLQGLNPQMGTEGDGENWMAIHKEVVDGAYEVIKLKGYTSWAIGMSVADLVESIIKNMHKVHPVSTLVQGMHGVKDEVFLSVPCVLGNSGLTDVIHMALKAEEEKQVQKSAETLWGVQKELTL.

NAD(+)-binding positions include 29–57 (GMVG…MEDK) and Arg-98. Substrate-binding residues include Arg-105, Asn-137, and Arg-168. Asn-137 is an NAD(+) binding site. His-192 serves as the catalytic Proton acceptor. Thr-247 contributes to the substrate binding site.

This sequence belongs to the LDH/MDH superfamily. LDH family. Homotetramer.

Its subcellular location is the cytoplasm. It catalyses the reaction (S)-lactate + NAD(+) = pyruvate + NADH + H(+). It functions in the pathway fermentation; pyruvate fermentation to lactate; (S)-lactate from pyruvate: step 1/1. Its function is as follows. Interconverts simultaneously and stereospecifically pyruvate and lactate with concomitant interconversion of NADH and NAD(+). The sequence is that of L-lactate dehydrogenase A chain (ldha) from Paranotothenia magellanica (Maori cod).